The chain runs to 400 residues: Enoyl-[acyl-carrier-protein] reductase [NADH] (400 aa).

NAD(+)-binding positions include 48–53 (GASTGY), 74–75 (FE), 111–112 (DA), and 139–140 (LA). Residue tyrosine 225 participates in substrate binding. Residue tyrosine 235 is the Proton donor of the active site. NAD(+)-binding positions include lysine 244 and 273 to 275 (VVT).

The protein belongs to the TER reductase family. In terms of assembly, monomer.

It catalyses the reaction a 2,3-saturated acyl-[ACP] + NAD(+) = a (2E)-enoyl-[ACP] + NADH + H(+). The protein operates within lipid metabolism; fatty acid biosynthesis. Its function is as follows. Involved in the final reduction of the elongation cycle of fatty acid synthesis (FAS II). Catalyzes the reduction of a carbon-carbon double bond in an enoyl moiety that is covalently linked to an acyl carrier protein (ACP). This Burkholderia vietnamiensis (strain G4 / LMG 22486) (Burkholderia cepacia (strain R1808)) protein is Enoyl-[acyl-carrier-protein] reductase [NADH].